A 730-amino-acid chain; its full sequence is Catalase-peroxidase (730 aa).

Residues 1–25 form a disordered region; it reads MEEKKCPVTGHTQHTPTGGGTKNKD. The tryptophyl-tyrosyl-methioninium (Trp-Tyr) (with M-244) cross-link spans 95-218; that stretch reads WHSAGTYRLN…LAAVQMGLIY (124 aa). The active-site Proton acceptor is histidine 96. The tryptophyl-tyrosyl-methioninium (Tyr-Met) (with W-95) cross-link spans 218-244; that stretch reads YVNPEGPNGQPSVLASGRDVRDTFKRM. Histidine 259 lines the heme b pocket.

It belongs to the peroxidase family. Peroxidase/catalase subfamily. In terms of assembly, homodimer or homotetramer. It depends on heme b as a cofactor. In terms of processing, formation of the three residue Trp-Tyr-Met cross-link is important for the catalase, but not the peroxidase activity of the enzyme.

It catalyses the reaction H2O2 + AH2 = A + 2 H2O. The catalysed reaction is 2 H2O2 = O2 + 2 H2O. Functionally, bifunctional enzyme with both catalase and broad-spectrum peroxidase activity. This chain is Catalase-peroxidase, found in Desulfitobacterium hafniense (strain Y51).